The sequence spans 155 residues: Small ribosomal subunit protein uS7c (155 aa).

Belongs to the universal ribosomal protein uS7 family. In terms of assembly, part of the 30S ribosomal subunit.

Its subcellular location is the plastid. Its function is as follows. One of the primary rRNA binding proteins, it binds directly to 16S rRNA where it nucleates assembly of the head domain of the 30S subunit. The protein is Small ribosomal subunit protein uS7c (rps7) of Aneura mirabilis (Parasitic liverwort).